We begin with the raw amino-acid sequence, 218 residues long: Octanoyltransferase (218 aa).

Residues 34 to 209 (ETSRDELWIV…TFSQELGYQH (176 aa)) form the BPL/LPL catalytic domain. Substrate contacts are provided by residues 73–80 (RGGQVTYH), 140–142 (SLG), and 153–155 (GLA). C171 (acyl-thioester intermediate) is an active-site residue.

Belongs to the LipB family.

It is found in the cytoplasm. It catalyses the reaction octanoyl-[ACP] + L-lysyl-[protein] = N(6)-octanoyl-L-lysyl-[protein] + holo-[ACP] + H(+). Its pathway is protein modification; protein lipoylation via endogenous pathway; protein N(6)-(lipoyl)lysine from octanoyl-[acyl-carrier-protein]: step 1/2. Functionally, catalyzes the transfer of endogenously produced octanoic acid from octanoyl-acyl-carrier-protein onto the lipoyl domains of lipoate-dependent enzymes. Lipoyl-ACP can also act as a substrate although octanoyl-ACP is likely to be the physiological substrate. The polypeptide is Octanoyltransferase (Shewanella loihica (strain ATCC BAA-1088 / PV-4)).